The primary structure comprises 395 residues: S-adenosylmethionine synthase (395 aa).

Histidine 16 is a binding site for ATP. Aspartate 18 contributes to the Mg(2+) binding site. Residue glutamate 44 coordinates K(+). Positions 57 and 100 each coordinate L-methionine. The flexible loop stretch occupies residues glutamine 100–arginine 110. ATP contacts are provided by residues aspartate 167–lysine 169, arginine 233–phenylalanine 234, aspartate 242, arginine 248–lysine 249, alanine 265, and lysine 269. Aspartate 242 serves as a coordination point for L-methionine. Lysine 273 lines the L-methionine pocket.

It belongs to the AdoMet synthase family. In terms of assembly, homotetramer; dimer of dimers. Requires Mg(2+) as cofactor. It depends on K(+) as a cofactor.

It is found in the cytoplasm. It carries out the reaction L-methionine + ATP + H2O = S-adenosyl-L-methionine + phosphate + diphosphate. Its pathway is amino-acid biosynthesis; S-adenosyl-L-methionine biosynthesis; S-adenosyl-L-methionine from L-methionine: step 1/1. Catalyzes the formation of S-adenosylmethionine (AdoMet) from methionine and ATP. The overall synthetic reaction is composed of two sequential steps, AdoMet formation and the subsequent tripolyphosphate hydrolysis which occurs prior to release of AdoMet from the enzyme. This Burkholderia ambifaria (strain MC40-6) protein is S-adenosylmethionine synthase.